We begin with the raw amino-acid sequence, 340 residues long: Olfactory receptor 5T3 (340 aa).

The Extracellular portion of the chain corresponds to 1–55 (MDSTFTGYNLYNLQVKTEMDKLSSGLDIYRNPLKNKTEVTMFILTGFTDDFELQV). Residue N35 is glycosylated (N-linked (GlcNAc...) asparagine). A helical transmembrane segment spans residues 56 to 76 (FLFLLFFAIYLFTLIGNLGLV). Topologically, residues 77 to 84 (VLVIEDSW) are cytoplasmic. Residues 85–105 (LHNPMYYFLSVLSFLDACYST) form a helical membrane-spanning segment. Over 106 to 129 (VVTPKMLVNFLAKNKSISFIGCAT) the chain is Extracellular. Residue N119 is glycosylated (N-linked (GlcNAc...) asparagine). C127 and C219 are oxidised to a cystine. Residues 130–150 (QMLLFVTFGTTECFLLAAMAY) form a helical membrane-spanning segment. Over 151 to 169 (DHYVAIYNPLLYSVSMSPR) the chain is Cytoplasmic. Residues 170-190 (VYVPLITASYVAGILHATIHI) form a helical membrane-spanning segment. Residues 191-226 (VATFSLSFCGSNEIRHVFCDMPPLLAISCSDTHTNQ) lie on the Extracellular side of the membrane. Residues 227-247 (LLLFYFVGSIEIVTILIVLIS) form a helical membrane-spanning segment. The Cytoplasmic segment spans residues 248 to 267 (CDFILLSILKMHSAKGRQKA). A helical membrane pass occupies residues 268–288 (FSTCGSHLTGVTIYHGTILVS). At 289-301 (YMRPSSSYASDHD) the chain is on the extracellular side. A helical membrane pass occupies residues 302–322 (IIVSIFYTIVIPKLNPIIYSL). Residues 323-340 (RNKEVKKAVKKMLKLVYK) lie on the Cytoplasmic side of the membrane.

The protein belongs to the G-protein coupled receptor 1 family.

The protein resides in the cell membrane. Its function is as follows. Odorant receptor. The sequence is that of Olfactory receptor 5T3 (OR5T3) from Homo sapiens (Human).